A 291-amino-acid chain; its full sequence is Prolyl 4-hydroxylase 5 (291 aa).

Topologically, residues M1–Q22 are cytoplasmic. A helical; Signal-anchor for type II membrane protein transmembrane segment spans residues A23 to L43. The Extracellular portion of the chain corresponds to S44–V291. A glycan (N-linked (GlcNAc...) asparagine) is linked at N51. Residues N163–V286 enclose the Fe2OG dioxygenase domain. Fe cation contacts are provided by H181 and D183. N222 is a glycosylation site (N-linked (GlcNAc...) asparagine). H267 is a binding site for Fe cation. K277 serves as a coordination point for 2-oxoglutarate.

This sequence belongs to the P4HA family. Fe(2+) is required as a cofactor. The cofactor is L-ascorbate. In terms of tissue distribution, expressed in epidermal root hair cells (trichoblasts).

Its subcellular location is the endoplasmic reticulum membrane. The protein resides in the golgi apparatus membrane. The enzyme catalyses L-prolyl-[collagen] + 2-oxoglutarate + O2 = trans-4-hydroxy-L-prolyl-[collagen] + succinate + CO2. Catalyzes the post-translational formation of 4-hydroxyproline in -Xaa-Pro-Gly- sequences in proline-rich peptide sequences of plant glycoproteins and other proteins. Hydroxyprolines are important constituent of many plant cell wall glycoproteins such as extensins, hydroxyproline-rich glycoproteins, lectins and arabinogalactan proteins. Possesses high affinity for leucine-rich repeat and proline-rich extensins of root cell walls that are essential for root hair development. Hydroxyprolines define the subsequent O-glycosylation sites by arabinosyltransferases which elongate the O-arabinosides on extensins. The polypeptide is Prolyl 4-hydroxylase 5 (Arabidopsis thaliana (Mouse-ear cress)).